A 666-amino-acid chain; its full sequence is Spartin (666 aa).

Residue M1 is modified to N-acetylmethionine. The MIT domain occupies 16–94 (IREAYKKAFL…LQNVRTRLEI (79 aa)). The tract at residues 124-156 (EKLPEPQSFSSAPQHAEVNGNTSTPSAGAVAAP) is disordered. Over residues 146–156 (STPSAGAVAAP) the composition is skewed to low complexity. A ubiquitin-binding region (UBR) domain region spans residues 190-380 (DSGEFSSVGE…QLDQGNKDVR (191 aa)). Residues 193–200 (EFSSVGEE) carry the LC3-interacting region (LIR); mediates interaction with MAP1LC3A AND MAP1LC3C motif. The disordered stretch occupies residues 344–398 (EENEFQIPGRTRPSSDQLKEASGTDVKQLDQGNKDVRHKGKRGKRAKDTSSEEVN). A Glycyl lysine isopeptide (Lys-Gly) (interchain with G-Cter in ubiquitin) cross-link involves residue K362. Basic residues predominate over residues 379–388 (VRHKGKRGKR). Residues 427 to 611 (ILSGASWVSW…YNINNIGIKA (185 aa)) enclose the Senescence domain. Residues 431–503 (ASWVSWGLVK…LVDGVCTVAN (73 aa)) are required for localization to lipid droplets. Position 470 is a phosphoserine (S470). The interval 636–666 (RENQEGAANVNVRGEKDEQTKEVKEAKKKDK) is disordered. Residues 648–666 (RGEKDEQTKEVKEAKKKDK) show a composition bias toward basic and acidic residues.

As to quaternary structure, interacts with ITCH and WWP1. Interacts (via MIT domain) with IST1; leading to the recruitment of SPART to midbodies. Interacts with MAP1LC3A and MAP1LC3C. In terms of processing, ubiquitinated; ubiquitination does not require ITCH and WWP1. In terms of tissue distribution, ubiquitously expressed, with highest levels of expression detected in adipose tissue.

Its subcellular location is the cytoplasm. It is found in the midbody. The protein localises to the lipid droplet. In terms of biological role, lipophagy receptor that plays an important role in lipid droplet (LD) turnover in motor neurons. Localizes to LDs and interacts with components of the autophagy machinery, such as MAP1LC3A/C proteins to deliver LDs to autophagosomes for degradation via lipophagy. Lipid transfer protein required for lipid droplet degradation, including by lipophagy. Can bind and transfer all lipid species found in lipid droplets, from phospholipids to triglycerides and sterol esters but the direction of lipid transfer by spartin and its cargos are unknown. May be implicated in endosomal trafficking, or microtubule dynamics, or both. Participates in cytokinesis. In Homo sapiens (Human), this protein is Spartin.